A 362-amino-acid chain; its full sequence is Dihydroorotate dehydrogenase (quinone) (362 aa).

FMN-binding positions include 62 to 66 and Thr86; that span reads AGYDK. Substrate is bound at residue Lys66. 111 to 115 contacts substrate; it reads NRLGF. FMN contacts are provided by Asn139 and Asn170. Asn170 contributes to the substrate binding site. Ser173 serves as the catalytic Nucleophile. Substrate is bound at residue Asn175. FMN-binding residues include Lys215 and Ser243. Substrate is bound at residue 244-245; the sequence is NT. FMN is bound by residues Gly266, Gly295, and 316–317; that span reads YS.

Belongs to the dihydroorotate dehydrogenase family. Type 2 subfamily. Monomer. FMN serves as cofactor.

The protein localises to the cell membrane. The enzyme catalyses (S)-dihydroorotate + a quinone = orotate + a quinol. Its pathway is pyrimidine metabolism; UMP biosynthesis via de novo pathway; orotate from (S)-dihydroorotate (quinone route): step 1/1. In terms of biological role, catalyzes the conversion of dihydroorotate to orotate with quinone as electron acceptor. The chain is Dihydroorotate dehydrogenase (quinone) from Sinorhizobium medicae (strain WSM419) (Ensifer medicae).